The chain runs to 261 residues: Cytochrome c oxidase subunit 3 (261 aa).

The Mitochondrial matrix portion of the chain corresponds to 1 to 15 (MAHQAHAYHMVDPSP). Residues 16-34 (WPLTGAIGALFLTSGLAIW) form a helical membrane-spanning segment. The Mitochondrial intermembrane segment spans residues 35-40 (FHFQSV). The helical transmembrane segment at 41-66 (TLLTLGLILLLLTMYQWWRDIIREGT) threads the bilayer. At 67 to 72 (FQGHHT) the chain is on the mitochondrial matrix side. Residues 73-105 (PPVQKGLRYGMILFITSEVFFFLGFFWAFYHSS) traverse the membrane as a helical segment. Residues 106 to 128 (LAPTPELGGCWPPTGITPLDPFE) are Mitochondrial intermembrane-facing. Residues 129 to 152 (VPLLNTAVLLASGVTVTWAHHSLM) form a helical membrane-spanning segment. Over 153–155 (EGA) the chain is Mitochondrial matrix. Residues 156 to 183 (RKQAIQALALTIILGVYFTALQAMEYYE) form a helical membrane-spanning segment. The Mitochondrial intermembrane segment spans residues 184 to 190 (APFTIAD). The chain crosses the membrane as a helical span at residues 191–223 (GVYGSTFFVATGFHGLHVIIGSSFLAVCLLRQI). At 224-232 (QYHFTSEHH) the chain is on the mitochondrial matrix side. A helical membrane pass occupies residues 233 to 256 (FGFEAAAWYWHFVDVVWLFLYVSI). Residues 257 to 261 (YWWGS) are Mitochondrial intermembrane-facing.

The protein belongs to the cytochrome c oxidase subunit 3 family. As to quaternary structure, component of the cytochrome c oxidase (complex IV, CIV), a multisubunit enzyme composed of 14 subunits. The complex is composed of a catalytic core of 3 subunits MT-CO1, MT-CO2 and MT-CO3, encoded in the mitochondrial DNA, and 11 supernumerary subunits COX4I, COX5A, COX5B, COX6A, COX6B, COX6C, COX7A, COX7B, COX7C, COX8 and NDUFA4, which are encoded in the nuclear genome. The complex exists as a monomer or a dimer and forms supercomplexes (SCs) in the inner mitochondrial membrane with NADH-ubiquinone oxidoreductase (complex I, CI) and ubiquinol-cytochrome c oxidoreductase (cytochrome b-c1 complex, complex III, CIII), resulting in different assemblies (supercomplex SCI(1)III(2)IV(1) and megacomplex MCI(2)III(2)IV(2)).

The protein resides in the mitochondrion inner membrane. It carries out the reaction 4 Fe(II)-[cytochrome c] + O2 + 8 H(+)(in) = 4 Fe(III)-[cytochrome c] + 2 H2O + 4 H(+)(out). Component of the cytochrome c oxidase, the last enzyme in the mitochondrial electron transport chain which drives oxidative phosphorylation. The respiratory chain contains 3 multisubunit complexes succinate dehydrogenase (complex II, CII), ubiquinol-cytochrome c oxidoreductase (cytochrome b-c1 complex, complex III, CIII) and cytochrome c oxidase (complex IV, CIV), that cooperate to transfer electrons derived from NADH and succinate to molecular oxygen, creating an electrochemical gradient over the inner membrane that drives transmembrane transport and the ATP synthase. Cytochrome c oxidase is the component of the respiratory chain that catalyzes the reduction of oxygen to water. Electrons originating from reduced cytochrome c in the intermembrane space (IMS) are transferred via the dinuclear copper A center (CU(A)) of subunit 2 and heme A of subunit 1 to the active site in subunit 1, a binuclear center (BNC) formed by heme A3 and copper B (CU(B)). The BNC reduces molecular oxygen to 2 water molecules using 4 electrons from cytochrome c in the IMS and 4 protons from the mitochondrial matrix. The sequence is that of Cytochrome c oxidase subunit 3 (mt-co3) from Formosania lacustris (Oriental stream loach).